A 388-amino-acid polypeptide reads, in one-letter code: Chaperone protein DnaJ (388 aa).

The J domain maps to 6–71 (DYYEILGVPR…EKRKLYDQFG (66 aa)). Residues 147–229 (GCEKEIPIYR…CGGTGNVRRQ (83 aa)) form a CR-type zinc finger. The Zn(2+) site is built by Cys-160, Cys-163, Cys-177, Cys-180, Cys-203, Cys-206, Cys-217, and Cys-220. CXXCXGXG motif repeat units lie at residues 160–167 (CSVCGGSG), 177–184 (CQKCGGTG), 203–210 (CDACGGTG), and 217–224 (CRECGGTG).

It belongs to the DnaJ family. As to quaternary structure, homodimer. Requires Zn(2+) as cofactor.

Its subcellular location is the cytoplasm. Participates actively in the response to hyperosmotic and heat shock by preventing the aggregation of stress-denatured proteins and by disaggregating proteins, also in an autonomous, DnaK-independent fashion. Unfolded proteins bind initially to DnaJ; upon interaction with the DnaJ-bound protein, DnaK hydrolyzes its bound ATP, resulting in the formation of a stable complex. GrpE releases ADP from DnaK; ATP binding to DnaK triggers the release of the substrate protein, thus completing the reaction cycle. Several rounds of ATP-dependent interactions between DnaJ, DnaK and GrpE are required for fully efficient folding. Also involved, together with DnaK and GrpE, in the DNA replication of plasmids through activation of initiation proteins. The sequence is that of Chaperone protein DnaJ from Caldicellulosiruptor bescii (strain ATCC BAA-1888 / DSM 6725 / KCTC 15123 / Z-1320) (Anaerocellum thermophilum).